A 266-amino-acid polypeptide reads, in one-letter code: Cell division protein FtsQ (266 aa).

Topologically, residues Met-1 to Ala-31 are cytoplasmic. A helical transmembrane segment spans residues Ile-32 to Phe-52. The Periplasmic segment spans residues Thr-53–Tyr-266. Residues Phe-72 to Arg-140 enclose the POTRA domain.

The protein belongs to the FtsQ/DivIB family. FtsQ subfamily.

It localises to the cell inner membrane. Functionally, essential cell division protein. The chain is Cell division protein FtsQ from Rickettsia typhi (strain ATCC VR-144 / Wilmington).